The chain runs to 455 residues: Kynurenine--oxoglutarate transaminase 3 (455 aa).

Gly-71 contacts substrate. Residue Lys-116 is modified to N6-acetyllysine; alternate. Position 116 is an N6-succinyllysine; alternate (Lys-116). Asn-218 contributes to the substrate binding site. The residue at position 280 (Lys-280) is an N6-(pyridoxal phosphate)lysine. Arg-430 contacts substrate.

The protein belongs to the class-I pyridoxal-phosphate-dependent aminotransferase family. In terms of assembly, homodimer. The cofactor is pyridoxal 5'-phosphate.

The enzyme catalyses L-kynurenine + 2-oxoglutarate = kynurenate + L-glutamate + H2O. It catalyses the reaction L-kynurenine + glyoxylate = kynurenate + glycine + H2O. The catalysed reaction is 3-hydroxy-L-kynurenine + glyoxylate = xanthurenate + glycine + H2O. It carries out the reaction an S-substituted L-cysteine + H2O = a thiol + pyruvate + NH4(+). The protein operates within amino-acid degradation; L-kynurenine degradation; kynurenate from L-kynurenine: step 1/2. Its function is as follows. Catalyzes the irreversible transamination of the L-tryptophan metabolite L-kynurenine to form kynurenic acid (KA), an intermediate in the tryptophan catabolic pathway which is also a broad spectrum antagonist of the three ionotropic excitatory amino acid receptors among others. May catalyze the beta-elimination of S-conjugates and Se-conjugates of L-(seleno)cysteine, resulting in the cleavage of the C-S or C-Se bond. Has transaminase activity towards L-kynurenine, tryptophan, phenylalanine, serine, cysteine, methionine, histidine, glutamine and asparagine with glyoxylate as an amino group acceptor (in vitro). Has lower activity with 2-oxoglutarate as amino group acceptor (in vitro). This chain is Kynurenine--oxoglutarate transaminase 3, found in Bos taurus (Bovine).